Reading from the N-terminus, the 686-residue chain is Methionine--tRNA ligase (686 aa).

Residues 15 to 25 carry the 'HIGH' region motif; that stretch reads PYANGSIHLGH. Residues C146, C149, C159, and C162 each contribute to the Zn(2+) site. The short motif at 332–336 is the 'KMSKS' region element; it reads KMSKS. Position 335 (K335) interacts with ATP. The interval 550-571 is disordered; that stretch reads AAAEAAAKEKAEAEKEQASQTE. A tRNA-binding domain is found at 585-686; it reads AFSAVDMRIA…EGAQPGMRVM (102 aa).

The protein belongs to the class-I aminoacyl-tRNA synthetase family. MetG type 1 subfamily. In terms of assembly, homodimer. It depends on Zn(2+) as a cofactor.

The protein resides in the cytoplasm. It carries out the reaction tRNA(Met) + L-methionine + ATP = L-methionyl-tRNA(Met) + AMP + diphosphate. Functionally, is required not only for elongation of protein synthesis but also for the initiation of all mRNA translation through initiator tRNA(fMet) aminoacylation. In Vibrio atlanticus (strain LGP32) (Vibrio splendidus (strain Mel32)), this protein is Methionine--tRNA ligase.